A 456-amino-acid chain; its full sequence is Bifunctional protein GlmU (456 aa).

Positions 1–229 (MLNSAMSVVI…ISETDGVNNR (229 aa)) are pyrophosphorylase. Residues 11–14 (LAAG), Lys25, Gln76, 81–82 (GT), 103–105 (YGD), Gly140, Glu154, Asn169, and Asn227 contribute to the UDP-N-acetyl-alpha-D-glucosamine site. A Mg(2+)-binding site is contributed by Asp105. Asn227 serves as a coordination point for Mg(2+). Positions 230–250 (LQLSRLERIYQAEQAEKLLLS) are linker. Positions 251–456 (GVMLRDPARF…QGWQRPVKKK (206 aa)) are N-acetyltransferase. UDP-N-acetyl-alpha-D-glucosamine contacts are provided by Arg333 and Lys351. The Proton acceptor role is filled by His363. 2 residues coordinate UDP-N-acetyl-alpha-D-glucosamine: Tyr366 and Asn377. Residues Ala380, 386–387 (NY), Ser405, Ala423, and Arg440 contribute to the acetyl-CoA site.

In the N-terminal section; belongs to the N-acetylglucosamine-1-phosphate uridyltransferase family. The protein in the C-terminal section; belongs to the transferase hexapeptide repeat family. Homotrimer. It depends on Mg(2+) as a cofactor.

The protein resides in the cytoplasm. The enzyme catalyses alpha-D-glucosamine 1-phosphate + acetyl-CoA = N-acetyl-alpha-D-glucosamine 1-phosphate + CoA + H(+). The catalysed reaction is N-acetyl-alpha-D-glucosamine 1-phosphate + UTP + H(+) = UDP-N-acetyl-alpha-D-glucosamine + diphosphate. The protein operates within nucleotide-sugar biosynthesis; UDP-N-acetyl-alpha-D-glucosamine biosynthesis; N-acetyl-alpha-D-glucosamine 1-phosphate from alpha-D-glucosamine 6-phosphate (route II): step 2/2. It participates in nucleotide-sugar biosynthesis; UDP-N-acetyl-alpha-D-glucosamine biosynthesis; UDP-N-acetyl-alpha-D-glucosamine from N-acetyl-alpha-D-glucosamine 1-phosphate: step 1/1. It functions in the pathway bacterial outer membrane biogenesis; LPS lipid A biosynthesis. In terms of biological role, catalyzes the last two sequential reactions in the de novo biosynthetic pathway for UDP-N-acetylglucosamine (UDP-GlcNAc). The C-terminal domain catalyzes the transfer of acetyl group from acetyl coenzyme A to glucosamine-1-phosphate (GlcN-1-P) to produce N-acetylglucosamine-1-phosphate (GlcNAc-1-P), which is converted into UDP-GlcNAc by the transfer of uridine 5-monophosphate (from uridine 5-triphosphate), a reaction catalyzed by the N-terminal domain. This Salmonella gallinarum (strain 287/91 / NCTC 13346) protein is Bifunctional protein GlmU.